Here is a 187-residue protein sequence, read N- to C-terminus: Putative glutathione-dependent formaldehyde-activating enzyme (187 aa).

The region spanning 20 to 166 is the CENP-V/GFA domain; the sequence is FPGGKLYCHC…FESVGLKTYD (147 aa). Zn(2+) contacts are provided by C27, C29, C48, C50, C53, C95, and C98.

This sequence belongs to the Gfa family. Zn(2+) serves as cofactor.

It catalyses the reaction S-(hydroxymethyl)glutathione = glutathione + formaldehyde. Its pathway is one-carbon metabolism; formaldehyde degradation; formate from formaldehyde (glutathione route): step 1/3. Catalyzes the condensation of formaldehyde and glutathione to S-hydroxymethylglutathione. This Talaromyces marneffei (strain ATCC 18224 / CBS 334.59 / QM 7333) (Penicillium marneffei) protein is Putative glutathione-dependent formaldehyde-activating enzyme.